A 490-amino-acid chain; its full sequence is MKKSLLAVMLTGLFALVSLPALGNVNLEQLKQKAESGEAKAQLELGYRYFQGNETTKDLTQAMDWFRRAAEQGYTPAEYVLGLRYMNGEGVPQDYAQAVIWYKKAALKGLPQAQQNLGVMYHEGNGVKVDKAESVKWFRLAAEQGRDSGQQSMGDAYFEGDGVTRDYVMAREWYSKAAEQGNVWSCNQLGYMYSRGLGVERNDAISAQWYRKSATSGDELGQLHLADMYYFGIGVTQDYTQSRVLFSQSAEQGNSIAQFRLGYILEQGLAGAKEPLKALEWYRKSAEQGNSDGQYYLAHLYDKGAEGVAKNREQAISWYTKSAEQGDATAQANLGAIYFRLGSEEEHKKAVEWFRKAAAKGEKAAQFNLGNALLQGKGVKKDEQQAAIWMRKAAEQGLSAAQVQLGEIYYYGLGVERDYVQAWAWFDTASTNDMNLFGTENRNITEKKLTAKQLQQAELLSQQYIEKYAPEAWARMQKLKAQSAVKTGNK.

The N-terminal stretch at 1–23 is a signal peptide; the sequence is MKKSLLAVMLTGLFALVSLPALG. Sel1-like repeat units lie at residues 39–74, 77–109, 111–145, 153–182, 185–218, 222–254, 256–290, 291–327, 328–361, 364–397, and 399–430; these read AKAQ…EQGY, AEYV…ALKG, PQAQ…AEQG, MGDA…EQGN, SCNQ…TSGD, QLHL…EQGN, IAQF…EQGN, SDGQ…EQGD, ATAQ…AAKG, AAQF…AEQG, and SAAQ…DTAS. Mg(2+) contacts are provided by H122, E159, and D161.

As to quaternary structure, interacts with human secreted IgA (SIgA) at least via resides 244-260. Mg(2+) serves as cofactor.

Its subcellular location is the cell surface. Upon host (human neutrophil) infection interferes with productive FCAR signaling, inhibiting secreted IgA (SIgA) effector functions and probably avoiding neutrophil activation. Inhibits the SIgA-mediated oxidative burst by neutrophils, decreases generation of ROS (reactive oxygen species) by neutrophils and reduces chemotaxis by neutrophils, all of which are SIgA effector functions used to stimulate the immune response. Does not block SIgA-binding to its receptor (FCAR) on neutrophils, but it decreases SIgA-stimulated phosphorylation of cytoplasmic proteins, including phospholipase C-gamma and MAP kinases, all actions that may be advantageous to the pathogen. This chain is Secretory immunoglobulin A-binding protein EsiB, found in Escherichia coli O6:H1 (strain CFT073 / ATCC 700928 / UPEC).